The chain runs to 3859 residues: Transformation/transcription domain-associated protein (3859 aa).

The residue at position 2 (Ala2) is an N-acetylalanine. Residues Pro491 to Pro526 are compositionally biased toward pro residues. Positions Pro491–Phe541 are disordered. The span at Lys529–Gln539 shows a compositional bias: basic and acidic residues. Phosphoserine is present on Ser1628. An interaction with TP53 region spans residues Ser2010–Thr2388. Positions Asp2023–Ser2044 are disordered. The span at Asn2033–Ser2044 shows a compositional bias: low complexity. The Bipartite nuclear localization signal signature appears at Lys2047–Arg2062. Phosphoserine is present on residues Ser2051 and Ser2077. Residue Lys2543 forms a Glycyl lysine isopeptide (Lys-Gly) (interchain with G-Cter in SUMO2) linkage. Residues Lys2543 to Ser2554 show a composition bias toward basic and acidic residues. A disordered region spans residues Lys2543–Glu2578. Residues Val2692–Thr3275 enclose the FAT domain. Residue Lys3078 is modified to N6-acetyllysine. A PI3K/PI4K catalytic domain is found at Met3500 to His3823. The G-loop stretch occupies residues Val3506–Ala3512. The interval His3687–Met3695 is catalytic loop. The interval Val3707–Thr3732 is activation loop. An FATC domain is found at Gln3827 to Leu3859.

It belongs to the PI3/PI4-kinase family. TRA1 subfamily. Interacts with MYC, E2F1 and E2F4 transcription factors. Interacts directly with p53/TP53. Interacts with GCN5L2. Component of various HAT complexes. Component of the PCAF complex, at least composed of TADA2L/ADA2, SUPT3H, TADA3L/ADA3, TAF5L/PAF65-beta, TAF6L/PAF65-alpha, TAF10/TAFII30, TAF12/TAFII20, TAF9/TAFII31 and TRRAP. Component of the TFTC-HAT complex, at least composed of TAF5L, TAF6L, TADA3L, SUPT3H/SPT3, TAF2/TAFII150, TAF4/TAFII135, TAF5/TAFII100, GCN5L2/GCN5, TAF10 and TRRAP. Component of the NuA4 histone acetyltransferase complex which contains the catalytic subunit KAT5/TIP60 and the subunits EP400, TRRAP/PAF400, BRD8/SMAP, EPC1, DMAP1/DNMAP1, RUVBL1/TIP49, RUVBL2, ING3, actin, ACTL6A/BAF53A, MORF4L1/MRG15, MORF4L2/MRGX, MRGBP, YEATS4/GAS41, VPS72/YL1 and MEAF6. Component of the STAGA complex, at least composed of SUPT3H, GCN5L2, SUPT7L, TAF5L, TAF6L, TADA3L, TAD1L, TAF10, TAF12, TRRAP and TAF9. The STAGA core complex is associated with a subcomplex required for histone deubiquitination composed of ATXN7L3, ENY2 and USP22. Component of the BAF53 complex, at least composed of BAF53A, RUVBL1, SMARCA4/BRG1, and TRRAP, which preferentially acetylates histone H4 (and H2A) within nucleosomes. Interacts with NPAT. Interaction with TELO2 and TTI1. Component of a SWR1-like complex.

Its subcellular location is the nucleus. Its function is as follows. Adapter protein, which is found in various multiprotein chromatin complexes with histone acetyltransferase activity (HAT), which gives a specific tag for epigenetic transcription activation. Component of the NuA4 histone acetyltransferase complex which is responsible for acetylation of nucleosomal histones H4 and H2A. Plays a central role in MYC transcription activation, and also participates in cell transformation by MYC. Required for p53/TP53-, E2F1- and E2F4-mediated transcription activation. Also involved in transcription activation mediated by the adenovirus E1A, a viral oncoprotein that deregulates transcription of key genes. Probably acts by linking transcription factors such as E1A, MYC or E2F1 to HAT complexes such as STAGA thereby allowing transcription activation. Probably not required in the steps following histone acetylation in processes of transcription activation. May be required for the mitotic checkpoint and normal cell cycle progression. Component of a SWR1-like complex that specifically mediates the removal of histone H2A.Z/H2AZ1 from the nucleosome. May play a role in the formation and maintenance of the auditory system. The polypeptide is Transformation/transcription domain-associated protein (TRRAP) (Homo sapiens (Human)).